Reading from the N-terminus, the 226-residue chain is Ribonuclease 3 (226 aa).

One can recognise an RNase III domain in the interval 6–128; that stretch reads MKKLQKFIGY…IIASIFLDSN (123 aa). Mg(2+) is bound at residue Glu41. Asp45 is a catalytic residue. Residues Asn114 and Glu117 each coordinate Mg(2+). Glu117 is an active-site residue. Residues 155–225 enclose the DRBM domain; that stretch reads DPKTRLQEYL…AQNALIRLEV (71 aa).

Belongs to the ribonuclease III family. In terms of assembly, homodimer. Mg(2+) serves as cofactor.

Its subcellular location is the cytoplasm. The catalysed reaction is Endonucleolytic cleavage to 5'-phosphomonoester.. In terms of biological role, digests double-stranded RNA. Involved in the processing of primary rRNA transcript to yield the immediate precursors to the large and small rRNAs (23S and 16S). Processes some mRNAs, and tRNAs when they are encoded in the rRNA operon. Processes pre-crRNA and tracrRNA of type II CRISPR loci if present in the organism. This Buchnera aphidicola subsp. Cinara cedri (strain Cc) protein is Ribonuclease 3.